A 442-amino-acid chain; its full sequence is Threonine/serine transporter TdcC (442 aa).

11 helical membrane passes run T21–I41, G44–L64, G96–V116, V139–M159, V162–I182, I206–I226, A258–S278, I312–G332, L364–I384, I388–I408, and E422–L442.

This sequence belongs to the amino acid/polyamine transporter 2 family. SdaC/TdcC subfamily.

The protein resides in the cell inner membrane. The catalysed reaction is L-threonine(in) + H(+)(in) = L-threonine(out) + H(+)(out). It catalyses the reaction L-serine(in) + H(+)(in) = L-serine(out) + H(+)(out). Its function is as follows. Involved in the import of threonine and serine into the cell, with the concomitant import of a proton (symport system). The chain is Threonine/serine transporter TdcC from Yersinia enterocolitica serotype O:8 / biotype 1B (strain NCTC 13174 / 8081).